The following is a 350-amino-acid chain: Sodium/calcium exchanger MaX1 (350 aa).

10 consecutive transmembrane segments (helical) span residues 4–24 (VNFLILLLGLVFLVKGSDYFV), 39–59 (FVIGLTLVAIGTSIPELASSI), 69–89 (IVIGNVVGSNIANVGLIVGVA), 101–121 (MLKRDGYIMLFSAVLFFVFAF), 125–145 (LSMLEAGLFVLLYIAYVFFLF), 202–222 (GGFAKDIFTLVLSCAAIVIGA), 242–264 (VIGTTLVAVGTSLPELVVTVSAA), 276–296 (VIGSNITNIFLILGLSGLFYP), 302–322 (MSLFFTTPVMIAISLILLIFI), and 330–350 (RWEGVVLMMFYVAFLVVLFYI).

This sequence belongs to the Ca(2+):cation antiporter (CaCA) (TC 2.A.19) family.

The protein localises to the cell membrane. Calcium transport is inhibited by Na(+), K(+), Li(+), Mg(2+) or Mn(2+). Functionally, catalyzes Na(+)/Ca(2+) exchange. The transport is electrogenic with a likely stoichiometry of 3 or more Na(+) for each Ca(2+). Is K(+)-independent. This chain is Sodium/calcium exchanger MaX1 (maX1), found in Methanosarcina acetivorans (strain ATCC 35395 / DSM 2834 / JCM 12185 / C2A).